A 252-amino-acid polypeptide reads, in one-letter code: Imidazole glycerol phosphate synthase subunit HisF (252 aa).

Residues D11 and D130 contribute to the active site.

Belongs to the HisA/HisF family. In terms of assembly, heterodimer of HisH and HisF.

Its subcellular location is the cytoplasm. It carries out the reaction 5-[(5-phospho-1-deoxy-D-ribulos-1-ylimino)methylamino]-1-(5-phospho-beta-D-ribosyl)imidazole-4-carboxamide + L-glutamine = D-erythro-1-(imidazol-4-yl)glycerol 3-phosphate + 5-amino-1-(5-phospho-beta-D-ribosyl)imidazole-4-carboxamide + L-glutamate + H(+). The protein operates within amino-acid biosynthesis; L-histidine biosynthesis; L-histidine from 5-phospho-alpha-D-ribose 1-diphosphate: step 5/9. In terms of biological role, IGPS catalyzes the conversion of PRFAR and glutamine to IGP, AICAR and glutamate. The HisF subunit catalyzes the cyclization activity that produces IGP and AICAR from PRFAR using the ammonia provided by the HisH subunit. In Streptococcus sanguinis (strain SK36), this protein is Imidazole glycerol phosphate synthase subunit HisF.